The chain runs to 296 residues: Ribose import binding protein RbsB (296 aa).

Residues 1–25 (MNMKKLATLVSAVALSATVSANAMA) form the signal peptide.

This sequence belongs to the bacterial solute-binding protein 2 family. The complex is composed of an ATP-binding protein (RbsA), two transmembrane proteins (RbsC) and a solute-binding protein (RbsB).

It localises to the periplasm. Part of the ABC transporter complex RbsABC involved in ribose import. Binds ribose. Also serves as the primary chemoreceptor for chemotaxis. The polypeptide is Ribose import binding protein RbsB (Escherichia coli (strain K12)).